Consider the following 448-residue polypeptide: Adenylyltransferase and sulfurtransferase UBA4 (448 aa).

ATP-binding positions include G88, D109, 116 to 120 (SNLHR), K133, and 177 to 178 (DT). Positions 219 and 222 each coordinate Zn(2+). C236 serves as the catalytic Glycyl thioester intermediate; for adenylyltransferase activity. C297 and C300 together coordinate Zn(2+). The Rhodanese domain occupies 349 to 446 (QGENSILIDV…WSKEIDSKIP (98 aa)). C405 functions as the Cysteine persulfide intermediate; for sulfurtransferase activity in the catalytic mechanism.

It in the N-terminal section; belongs to the HesA/MoeB/ThiF family. UBA4 subfamily. Zn(2+) is required as a cofactor.

The protein localises to the cytoplasm. It is found in the cytosol. Its pathway is tRNA modification; 5-methoxycarbonylmethyl-2-thiouridine-tRNA biosynthesis. Plays a central role in 2-thiolation of mcm(5)S(2)U at tRNA wobble positions of cytosolic tRNA(Lys), tRNA(Glu) and tRNA(Gln). Acts by mediating the C-terminal thiocarboxylation of sulfur carrier URM1. Its N-terminus first activates URM1 as acyl-adenylate (-COAMP), then the persulfide sulfur on the catalytic cysteine is transferred to URM1 to form thiocarboxylation (-COSH) of its C-terminus. The reaction probably involves hydrogen sulfide that is generated from the persulfide intermediate and that acts as a nucleophile towards URM1. Subsequently, a transient disulfide bond is formed. Does not use thiosulfate as sulfur donor; NFS1 probably acting as a sulfur donor for thiocarboxylation reactions. Prior mcm(5) tRNA modification by the elongator complex is required for 2-thiolation. May also be involved in protein urmylation. This Debaryomyces hansenii (strain ATCC 36239 / CBS 767 / BCRC 21394 / JCM 1990 / NBRC 0083 / IGC 2968) (Yeast) protein is Adenylyltransferase and sulfurtransferase UBA4.